The primary structure comprises 259 residues: Global transcriptional regulator CodY (259 aa).

The interval 1–155 (MNLLAKTRKL…GATVVGMEIL (155 aa)) is GAF domain. Residues 203–222 (ASKIADRVGITRSVIVNALR) constitute a DNA-binding region (H-T-H motif).

Belongs to the CodY family.

The protein localises to the cytoplasm. Its function is as follows. DNA-binding global transcriptional regulator which is involved in the adaptive response to starvation and acts by directly or indirectly controlling the expression of numerous genes in response to nutrient availability. During rapid exponential growth, CodY is highly active and represses genes whose products allow adaptation to nutrient depletion. The polypeptide is Global transcriptional regulator CodY (Exiguobacterium sibiricum (strain DSM 17290 / CCUG 55495 / CIP 109462 / JCM 13490 / 255-15)).